The chain runs to 511 residues: Bifunctional purine biosynthesis protein PurH (511 aa).

The MGS-like domain occupies 1 to 145 (MKQRALVSVS…KNHKFVSVIV (145 aa)).

This sequence belongs to the PurH family.

It carries out the reaction (6R)-10-formyltetrahydrofolate + 5-amino-1-(5-phospho-beta-D-ribosyl)imidazole-4-carboxamide = 5-formamido-1-(5-phospho-D-ribosyl)imidazole-4-carboxamide + (6S)-5,6,7,8-tetrahydrofolate. It catalyses the reaction IMP + H2O = 5-formamido-1-(5-phospho-D-ribosyl)imidazole-4-carboxamide. Its pathway is purine metabolism; IMP biosynthesis via de novo pathway; 5-formamido-1-(5-phospho-D-ribosyl)imidazole-4-carboxamide from 5-amino-1-(5-phospho-D-ribosyl)imidazole-4-carboxamide (10-formyl THF route): step 1/1. The protein operates within purine metabolism; IMP biosynthesis via de novo pathway; IMP from 5-formamido-1-(5-phospho-D-ribosyl)imidazole-4-carboxamide: step 1/1. This is Bifunctional purine biosynthesis protein PurH from Bacillus cereus (strain AH187).